A 514-amino-acid polypeptide reads, in one-letter code: FAD-dependent monooxygenase AacuC (514 aa).

The tract at residues 1–29 is disordered; the sequence is MVSNEYLTHGDKDEFDPAKWSSTPGELPP. Positions 8–17 are enriched in basic and acidic residues; sequence THGDKDEFDP. FAD-binding residues include V79 and R146. Residue R227 is part of the active site. 2 residues coordinate FAD: D358 and G371.

Belongs to the paxM FAD-dependent monooxygenase family. It depends on FAD as a cofactor.

It functions in the pathway secondary metabolite biosynthesis. FAD-dependent monooxygenase; part of the gene cluster that mediates the biosynthesis of the tetrahydroxanthone dimer secalonic acid D. The pathway begins with the synthesis of atrochrysone thioester by the polyketide synthase AacuL. The atrochrysone carboxyl ACP thioesterase AacuM then breaks the thioester bond and releases the atrochrysone carboxylic acid from AacuL. Atrochrysone carboxylic acid is decarboxylated by the decarboxylase AacuI, and oxidized by the anthrone oxygenase AacuG to yield emodin. Emodin is then reduced to emodin hydroquinone by a yet unidentified oxidoreductase. A-ring reduction by the short chain dehydrogenase AacuN, dehydration by the scytalone dehydratase-like protein AacuK and probable spontaneous re-oxidation, results in overall deoxygenation to chrysophanol. Baeyer-Villiger oxidation by the Baeyer-Villiger monooxygenase (BVMO) AacuH then yields monodictyphenone. Monodictyphenone is transformed into compounds with the tetrahydroxanthone skeleton via methylesterification by the methyltransferase AacuQ, followed by the action of the flavin-dependent monooxygenase AacuC, the isomerase AacuP, and the short chain dehydrogenase/reductase AacuF or AacuD. AacuF and AacuD should accept the same compound as a substrate but perform the ketoreduction with a different stereoselectivity, thus yielding blennolides B and A, respectively. In the final step of the biosynthesis, the cytochrome P450 monooxygenase AacuE accepts blennolide B and/or blennolide A to conduct the dimerization reaction to furnish the tetrahydroxanthone dimers, secalonic acids D, B, and F. This Aspergillus aculeatus (strain ATCC 16872 / CBS 172.66 / WB 5094) protein is FAD-dependent monooxygenase AacuC.